The chain runs to 480 residues: Probable pectin lyase F-2 (480 aa).

Residues 1 to 25 (MTLIRTVLMAAALLGASAHAQGVVG) form the signal peptide. Cys-83 and Cys-106 form a disulfide bridge. Residue Asn-111 is glycosylated (N-linked (GlcNAc...) asparagine). Arg-256 is a catalytic residue. Cys-322 and Cys-330 are joined by a disulfide. A compositionally biased stretch (low complexity) spans 386-401 (SSSAIPSSTPAPSSSA). Residues 386 to 436 (SSSAIPSSTPAPSSSALAKRHGGHDRHGLGHIPHLTEGGPGAWHTPGPAPS) form a disordered region.

It belongs to the polysaccharide lyase 1 family.

The protein resides in the secreted. The catalysed reaction is Eliminative cleavage of (1-&gt;4)-alpha-D-galacturonan methyl ester to give oligosaccharides with 4-deoxy-6-O-methyl-alpha-D-galact-4-enuronosyl groups at their non-reducing ends.. Pectinolytic enzymes consist of four classes of enzymes: pectin lyase, polygalacturonase, pectin methylesterase and rhamnogalacturonase. Among pectinolytic enzymes, pectin lyase is the most important in depolymerization of pectin, since it cleaves internal glycosidic bonds of highly methylated pectins. The chain is Probable pectin lyase F-2 (pelF-2) from Aspergillus terreus (strain NIH 2624 / FGSC A1156).